The sequence spans 431 residues: Adenylosuccinate synthetase (431 aa).

GTP is bound by residues G13–K19 and G41–T43. The Proton acceptor role is filled by D14. D14 and G41 together coordinate Mg(2+). IMP is bound by residues D14 to K17, N39 to H42, T130, R144, Q225, T240, and R304. Catalysis depends on H42, which acts as the Proton donor. A300–R306 lines the substrate pocket. GTP contacts are provided by residues R306, K332–D334, and S415–G417.

Belongs to the adenylosuccinate synthetase family. Homodimer. Mg(2+) serves as cofactor.

It localises to the cytoplasm. The catalysed reaction is IMP + L-aspartate + GTP = N(6)-(1,2-dicarboxyethyl)-AMP + GDP + phosphate + 2 H(+). It functions in the pathway purine metabolism; AMP biosynthesis via de novo pathway; AMP from IMP: step 1/2. Its function is as follows. Plays an important role in the de novo pathway of purine nucleotide biosynthesis. Catalyzes the first committed step in the biosynthesis of AMP from IMP. The protein is Adenylosuccinate synthetase of Shewanella loihica (strain ATCC BAA-1088 / PV-4).